The sequence spans 193 residues: dTTP/UTP pyrophosphatase (193 aa).

The active-site Proton acceptor is D68.

The protein belongs to the Maf family. YhdE subfamily. Requires a divalent metal cation as cofactor.

The protein resides in the cytoplasm. It carries out the reaction dTTP + H2O = dTMP + diphosphate + H(+). It catalyses the reaction UTP + H2O = UMP + diphosphate + H(+). Functionally, nucleoside triphosphate pyrophosphatase that hydrolyzes dTTP and UTP. May have a dual role in cell division arrest and in preventing the incorporation of modified nucleotides into cellular nucleic acids. The protein is dTTP/UTP pyrophosphatase of Ruegeria sp. (strain TM1040) (Silicibacter sp.).